A 445-amino-acid polypeptide reads, in one-letter code: Enolase 2 (445 aa).

Substrate contacts are provided by H164 and E173. The active-site Proton donor is E216. Positions 251, 301, and 328 each coordinate Mg(2+). Substrate contacts are provided by E301 and D328. K353 serves as the catalytic Proton acceptor. Residues 380 to 383 (SHRS) and K404 contribute to the substrate site.

The protein belongs to the enolase family. Homodimer. Mg(2+) serves as cofactor.

The protein localises to the cytoplasm. It catalyses the reaction (2R)-2-phosphoglycerate = phosphoenolpyruvate + H2O. The protein operates within carbohydrate degradation; glycolysis; pyruvate from D-glyceraldehyde 3-phosphate: step 4/5. This Hevea brasiliensis (Para rubber tree) protein is Enolase 2 (ENO2).